A 360-amino-acid chain; its full sequence is Phospho-N-acetylmuramoyl-pentapeptide-transferase (360 aa).

The next 10 helical transmembrane spans lie at 27–47, 71–91, 97–117, 132–152, 168–188, 199–219, 236–256, 263–283, 288–308, and 338–358; these read IVGL…LIAW, TPTM…LLWA, YVWC…IDDY, WKYF…YAIG, VMPQ…VGTS, GLAI…AWAT, AGEL…FLWF, VFMG…IAVL, FLLV…ILQV, and VIVR…ATLK.

It belongs to the glycosyltransferase 4 family. MraY subfamily. It depends on Mg(2+) as a cofactor.

The protein resides in the cell inner membrane. The enzyme catalyses UDP-N-acetyl-alpha-D-muramoyl-L-alanyl-gamma-D-glutamyl-meso-2,6-diaminopimeloyl-D-alanyl-D-alanine + di-trans,octa-cis-undecaprenyl phosphate = di-trans,octa-cis-undecaprenyl diphospho-N-acetyl-alpha-D-muramoyl-L-alanyl-D-glutamyl-meso-2,6-diaminopimeloyl-D-alanyl-D-alanine + UMP. Its pathway is cell wall biogenesis; peptidoglycan biosynthesis. Functionally, catalyzes the initial step of the lipid cycle reactions in the biosynthesis of the cell wall peptidoglycan: transfers peptidoglycan precursor phospho-MurNAc-pentapeptide from UDP-MurNAc-pentapeptide onto the lipid carrier undecaprenyl phosphate, yielding undecaprenyl-pyrophosphoryl-MurNAc-pentapeptide, known as lipid I. The protein is Phospho-N-acetylmuramoyl-pentapeptide-transferase of Proteus mirabilis (strain HI4320).